Reading from the N-terminus, the 727-residue chain is 1,4-alpha-glucan branching enzyme GlgB (727 aa).

Aspartate 405 functions as the Nucleophile in the catalytic mechanism. The active-site Proton donor is glutamate 458.

Belongs to the glycosyl hydrolase 13 family. GlgB subfamily. In terms of assembly, monomer.

The enzyme catalyses Transfers a segment of a (1-&gt;4)-alpha-D-glucan chain to a primary hydroxy group in a similar glucan chain.. It functions in the pathway glycan biosynthesis; glycogen biosynthesis. Catalyzes the formation of the alpha-1,6-glucosidic linkages in glycogen by scission of a 1,4-alpha-linked oligosaccharide from growing alpha-1,4-glucan chains and the subsequent attachment of the oligosaccharide to the alpha-1,6 position. The sequence is that of 1,4-alpha-glucan branching enzyme GlgB from Yersinia enterocolitica serotype O:8 / biotype 1B (strain NCTC 13174 / 8081).